A 471-amino-acid polypeptide reads, in one-letter code: Ankyrin repeat and death domain-containing protein 1A (471 aa).

ANK repeat units lie at residues 19 to 48, 52 to 81, 85 to 114, 120 to 149, 153 to 182, 186 to 215, 219 to 248, 251 to 280, 284 to 313, and 317 to 346; these read VGRV…AVDE, FGMN…KIHC, DGLT…DVAL, LGRT…DHSV, EGNT…DLEE, EGLT…TVNA, KNLS…CTNV, HGAS…DLNA, RQQT…DLNL, and QGKT…FYKW. One can recognise a Death domain in the interval 379–467; that stretch reads SVLWRLASRH…DLAELAVASV (89 aa).

The sequence is that of Ankyrin repeat and death domain-containing protein 1A (ANKDD1A) from Macaca fascicularis (Crab-eating macaque).